A 93-amino-acid polypeptide reads, in one-letter code: Ubiquinol-cytochrome-c reductase complex assembly factor 3 (93 aa).

Topologically, residues Met-1–Met-7 are mitochondrial matrix. The helical transmembrane segment at Leu-8–Val-28 threads the bilayer. Residues Ala-23–Trp-80 are mediates lipid-binding. Over Thr-29–Pro-93 the chain is Mitochondrial intermembrane.

It belongs to the UQCC3 family. In terms of assembly, associates with the ubiquinol-cytochrome c reductase complex (mitochondrial respiratory chain complex III or cytochrome b-c1 complex). Interacts with UQCC1. Forms a complex, named COMC, composed of UQCC1, UQCC2; UQCC3 and UQCC4; mediates MT-CYB hemylation and association with the first nuclear-encoded complex III subunit UQCRQ. Post-translationally, probably cleaved by OMA1 under mitochondrial stress conditions.

The protein resides in the mitochondrion inner membrane. Required for the assembly of the ubiquinol-cytochrome c reductase complex (mitochondrial respiratory chain complex III or cytochrome b-c1 complex), mediating cytochrome b recruitment and probably stabilization within the complex. Thereby, plays an important role in ATP production by mitochondria. Cardiolipin-binding protein, it may also control the cardiolipin composition of mitochondria membranes and their morphology. This chain is Ubiquinol-cytochrome-c reductase complex assembly factor 3, found in Homo sapiens (Human).